The following is a 255-amino-acid chain: Hydroxyacylglutathione hydrolase (255 aa).

Zn(2+)-binding residues include His55, His57, Asp59, His60, His112, Asp129, and His167.

This sequence belongs to the metallo-beta-lactamase superfamily. Glyoxalase II family. In terms of assembly, monomer. Zn(2+) serves as cofactor.

The enzyme catalyses an S-(2-hydroxyacyl)glutathione + H2O = a 2-hydroxy carboxylate + glutathione + H(+). Its pathway is secondary metabolite metabolism; methylglyoxal degradation; (R)-lactate from methylglyoxal: step 2/2. In terms of biological role, thiolesterase that catalyzes the hydrolysis of S-D-lactoyl-glutathione to form glutathione and D-lactic acid. This Halorhodospira halophila (strain DSM 244 / SL1) (Ectothiorhodospira halophila (strain DSM 244 / SL1)) protein is Hydroxyacylglutathione hydrolase.